The primary structure comprises 510 residues: Archaeal glutamate synthase [NADPH] (510 aa).

4Fe-4S ferredoxin-type domains are found at residues 10–37 and 38–68; these read YKVE…YRRE and GDRI…IKEN. Residues Cys-19, Cys-22, Cys-25, Cys-29, Cys-48, Cys-51, Cys-54, and Cys-58 each coordinate [4Fe-4S] cluster.

Belongs to the glutamate synthase family. The cofactor is FMN.

It catalyses the reaction 2 L-glutamate + NADP(+) = L-glutamine + 2-oxoglutarate + NADPH + H(+). The chain is Archaeal glutamate synthase [NADPH] from Methanocaldococcus jannaschii (strain ATCC 43067 / DSM 2661 / JAL-1 / JCM 10045 / NBRC 100440) (Methanococcus jannaschii).